Consider the following 332-residue polypeptide: tRNA uridine(34) hydroxylase (332 aa).

Residues 127–221 (SDPETVLIDT…YLEEVPKEKS (95 aa)) form the Rhodanese domain. C181 (cysteine persulfide intermediate) is an active-site residue. The disordered stretch occupies residues 308–332 (AKKLAQLNKQKKQQAKEAARKKAQQ). Positions 321-332 (QAKEAARKKAQQ) are enriched in basic and acidic residues.

The protein belongs to the TrhO family.

The enzyme catalyses uridine(34) in tRNA + AH2 + O2 = 5-hydroxyuridine(34) in tRNA + A + H2O. Catalyzes oxygen-dependent 5-hydroxyuridine (ho5U) modification at position 34 in tRNAs. This Francisella tularensis subsp. tularensis (strain FSC 198) protein is tRNA uridine(34) hydroxylase.